We begin with the raw amino-acid sequence, 112 residues long: Mediator of RNA polymerase II transcription subunit 22 (112 aa).

Positions 83 to 112 are disordered; that stretch reads KPEDGGEGQLADELLDKIEDTSDGVDKETA. The segment covering 96–112 has biased composition (basic and acidic residues); that stretch reads LLDKIEDTSDGVDKETA.

Belongs to the Mediator complex subunit 22 family. In terms of assembly, component of the Mediator complex.

It is found in the nucleus. In terms of biological role, component of the Mediator complex, a coactivator involved in the regulated transcription of nearly all RNA polymerase II-dependent genes. Mediator functions as a bridge to convey information from gene-specific regulatory proteins to the basal RNA polymerase II transcription machinery. Mediator is recruited to promoters by direct interactions with regulatory proteins and serves as a scaffold for the assembly of a functional preinitiation complex with RNA polymerase II and the general transcription factors. The protein is Mediator of RNA polymerase II transcription subunit 22 (SRB6) of Yarrowia lipolytica (strain CLIB 122 / E 150) (Yeast).